Reading from the N-terminus, the 206-residue chain is Large ribosomal subunit protein bL25 (206 aa).

This sequence belongs to the bacterial ribosomal protein bL25 family. CTC subfamily. In terms of assembly, part of the 50S ribosomal subunit; part of the 5S rRNA/L5/L18/L25 subcomplex. Contacts the 5S rRNA. Binds to the 5S rRNA independently of L5 and L18.

Its function is as follows. This is one of the proteins that binds to the 5S RNA in the ribosome where it forms part of the central protuberance. The polypeptide is Large ribosomal subunit protein bL25 (Paraburkholderia phytofirmans (strain DSM 17436 / LMG 22146 / PsJN) (Burkholderia phytofirmans)).